The primary structure comprises 125 residues: Large ribosomal subunit protein eL31 (125 aa).

Belongs to the eukaryotic ribosomal protein eL31 family. Component of the large ribosomal subunit.

The protein resides in the cytoplasm. Component of the large ribosomal subunit. The ribosome is a large ribonucleoprotein complex responsible for the synthesis of proteins in the cell. The sequence is that of Large ribosomal subunit protein eL31 (rpl31) from Xenopus laevis (African clawed frog).